We begin with the raw amino-acid sequence, 380 residues long: Homoserine O-acetyltransferase (380 aa).

The AB hydrolase-1 domain maps to 70 to 366; that stretch reads NAVLVFHALT…SPHGHDAFLI (297 aa). The active-site Nucleophile is serine 186. Arginine 250 contacts substrate. Residues aspartate 333 and histidine 361 contribute to the active site. Aspartate 362 lines the substrate pocket.

It belongs to the AB hydrolase superfamily. MetX family. Homodimer.

The protein localises to the cytoplasm. It carries out the reaction L-homoserine + acetyl-CoA = O-acetyl-L-homoserine + CoA. It functions in the pathway amino-acid biosynthesis; L-methionine biosynthesis via de novo pathway; O-acetyl-L-homoserine from L-homoserine: step 1/1. In terms of biological role, transfers an acetyl group from acetyl-CoA to L-homoserine, forming acetyl-L-homoserine. The protein is Homoserine O-acetyltransferase of Thermus thermophilus (strain ATCC 27634 / DSM 579 / HB8).